A 462-amino-acid chain; its full sequence is Sodium-coupled neutral amino acid transporter 7 (462 aa).

S28 bears the Phosphoserine mark. 11 helical membrane passes run 56-76 (AIFI…PAAF), 82-102 (VAAG…GLVI), 130-150 (LCEV…LIII), 178-198 (FTIS…REIG), 205-225 (FLSV…YIWP), 239-259 (ASWM…QCHV), 282-302 (AAMV…FLTF), 319-339 (MAVA…YPIL), 371-391 (VLQT…IPDI), 395-415 (ISVI…LCLI), and 428-448 (ASWW…AFIF).

It belongs to the amino acid/polyamine transporter 2 family. As to quaternary structure, interacts with the mTORC1 complex; this interaction mediates the recruitment of mTORC1 to the lysosome and its subsequent activation.

Its subcellular location is the lysosome membrane. It is found in the cell projection. The protein resides in the axon. It carries out the reaction L-asparagine(in) + Na(+)(in) = L-asparagine(out) + Na(+)(out). It catalyses the reaction L-glutamine(in) + Na(+)(in) = L-glutamine(out) + Na(+)(out). Functionally, symporter that selectively cotransports sodium ions and amino acids, such as L-glutamine and L-asparagine from the lysosome into the cytoplasm and may participates in mTORC1 activation. The transport activity requires an acidic lysosomal lumen. The polypeptide is Sodium-coupled neutral amino acid transporter 7 (Homo sapiens (Human)).